The following is a 79-amino-acid chain: MSNSDLNIERINELAKKKKEVGLTQEEAKEQTALRKAYLESFRKGFKQQIENTKVIDPEGNDVTPEKIKEIQQKRDNKN.

Residues 56–79 form a disordered region; it reads IDPEGNDVTPEKIKEIQQKRDNKN. Residues 64–79 show a composition bias toward basic and acidic residues; that stretch reads TPEKIKEIQQKRDNKN.

This sequence belongs to the UPF0291 family.

It localises to the cytoplasm. The sequence is that of UPF0291 protein SAV1341 from Staphylococcus aureus (strain Mu50 / ATCC 700699).